A 27-amino-acid polypeptide reads, in one-letter code: Pregnancy-associated glycoprotein 59 (27 aa).

Belongs to the peptidase A1 family. In terms of processing, glycosylated. Placenta.

This is Pregnancy-associated glycoprotein 59 (PAG59) from Capra hircus (Goat).